The chain runs to 176 residues: 3-hydroxyanthranilate 3,4-dioxygenase (176 aa).

Arginine 44 serves as a coordination point for O2. Fe cation is bound by residues histidine 48, glutamate 54, and histidine 92. Substrate is bound at residue glutamate 54. 2 residues coordinate substrate: arginine 96 and glutamate 106. Fe cation is bound by residues cysteine 121, cysteine 124, cysteine 158, and cysteine 161.

This sequence belongs to the 3-HAO family. Homodimer. Fe(2+) serves as cofactor.

It catalyses the reaction 3-hydroxyanthranilate + O2 = (2Z,4Z)-2-amino-3-carboxymuconate 6-semialdehyde. Its pathway is cofactor biosynthesis; NAD(+) biosynthesis; quinolinate from L-kynurenine: step 3/3. Functionally, catalyzes the oxidative ring opening of 3-hydroxyanthranilate to 2-amino-3-carboxymuconate semialdehyde, which spontaneously cyclizes to quinolinate. The sequence is that of 3-hydroxyanthranilate 3,4-dioxygenase from Xanthomonas campestris pv. campestris (strain B100).